The chain runs to 142 residues: Relaxin-3 (142 aa).

Residues 1–25 form the signal peptide; it reads MARYKLLLLLAVWVLTGELWPGAEA. 3 disulfide bridges follow: Cys-35–Cys-129, Cys-47–Cys-142, and Cys-128–Cys-133. A propeptide spans 55–118 (connecting peptide); the sequence is SDILAHEAMG…GTPGALRGSR (64 aa).

The protein belongs to the insulin family. As to quaternary structure, heterodimer of a B chain and an A chain linked by two disulfide bonds.

The protein localises to the secreted. May play a role in neuropeptide signaling processes. Ligand for LGR7, RXFP3 and RXFP4. The polypeptide is Relaxin-3 (RLN3) (Pan troglodytes (Chimpanzee)).